The sequence spans 332 residues: Probable farnesyl diphosphate synthase (332 aa).

The isopentenyl diphosphate site is built by Lys-75, Arg-78, and His-107. Residues Asp-114 and Asp-120 each contribute to the Mg(2+) site. (2E)-geranyl diphosphate is bound at residue Arg-125. Arg-126 lines the isopentenyl diphosphate pocket. Lys-208, Ser-209, Gln-250, and Lys-267 together coordinate (2E)-geranyl diphosphate.

It belongs to the FPP/GGPP synthase family. Mg(2+) serves as cofactor.

The protein resides in the cytoplasm. It carries out the reaction isopentenyl diphosphate + (2E)-geranyl diphosphate = (2E,6E)-farnesyl diphosphate + diphosphate. This chain is Probable farnesyl diphosphate synthase (fppS), found in Bradyrhizobium diazoefficiens (strain JCM 10833 / BCRC 13528 / IAM 13628 / NBRC 14792 / USDA 110).